The chain runs to 200 residues: Probable GTP-binding protein EngB (200 aa).

Positions 26–200 (SIPEVALAGR…IYEIAQCIKK (175 aa)) constitute an EngB-type G domain. GTP-binding positions include 34–41 (GRSNVGKS), 61–65 (GCTRQ), 80–83 (DLPG), 147–150 (TKID), and 179–181 (VSS). The Mg(2+) site is built by S41 and T63.

This sequence belongs to the TRAFAC class TrmE-Era-EngA-EngB-Septin-like GTPase superfamily. EngB GTPase family. It depends on Mg(2+) as a cofactor.

In terms of biological role, necessary for normal cell division and for the maintenance of normal septation. This is Probable GTP-binding protein EngB from Ehrlichia ruminantium (strain Gardel).